Reading from the N-terminus, the 126-residue chain is MAILGLGTDIVEIARIEAVIARSGDRLARRVLSDNEWAIWKTHHQPVRFLAKRFAVKEAAAKAFGTGIRNGLAFNQFEVFNDELGKPRLRLWGEALKLAEKLGVVNMHVTLADERHYACATVIIES.

Mg(2+) is bound by residues aspartate 9 and glutamate 58.

It belongs to the P-Pant transferase superfamily. AcpS family. It depends on Mg(2+) as a cofactor.

Its subcellular location is the cytoplasm. It catalyses the reaction apo-[ACP] + CoA = holo-[ACP] + adenosine 3',5'-bisphosphate + H(+). In terms of biological role, transfers the 4'-phosphopantetheine moiety from coenzyme A to a Ser of acyl-carrier-protein. The polypeptide is Holo-[acyl-carrier-protein] synthase (Escherichia coli (strain ATCC 8739 / DSM 1576 / NBRC 3972 / NCIMB 8545 / WDCM 00012 / Crooks)).